We begin with the raw amino-acid sequence, 338 residues long: Fructose-1,6-bisphosphatase class 1 1 (338 aa).

Mg(2+) contacts are provided by Glu91, Asp113, Leu115, and Asp116. Substrate-binding positions include 116-119 (DGSS), Asn208, and Lys274. Residue Glu280 coordinates Mg(2+).

Belongs to the FBPase class 1 family. Homotetramer. Mg(2+) is required as a cofactor.

It localises to the cytoplasm. It catalyses the reaction beta-D-fructose 1,6-bisphosphate + H2O = beta-D-fructose 6-phosphate + phosphate. It participates in carbohydrate biosynthesis; gluconeogenesis. This is Fructose-1,6-bisphosphatase class 1 1 from Cupriavidus taiwanensis (strain DSM 17343 / BCRC 17206 / CCUG 44338 / CIP 107171 / LMG 19424 / R1) (Ralstonia taiwanensis (strain LMG 19424)).